Here is a 73-residue protein sequence, read N- to C-terminus: Translational regulator CsrA (73 aa).

This sequence belongs to the CsrA/RsmA family. Homodimer; the beta-strands of each monomer intercalate to form a hydrophobic core, while the alpha-helices form wings that extend away from the core.

Its subcellular location is the cytoplasm. In terms of biological role, a translational regulator that binds mRNA to regulate translation initiation and/or mRNA stability. Usually binds in the 5'-UTR at or near the Shine-Dalgarno sequence preventing ribosome-binding, thus repressing translation. Its main target seems to be the major flagellin gene, while its function is anatagonized by FliW. This Clostridium acetobutylicum (strain ATCC 824 / DSM 792 / JCM 1419 / IAM 19013 / LMG 5710 / NBRC 13948 / NRRL B-527 / VKM B-1787 / 2291 / W) protein is Translational regulator CsrA.